The sequence spans 350 residues: Dihydroorotate dehydrogenase (quinone) (350 aa).

Residues Ala61 to Lys65 and Thr85 contribute to the FMN site. Lys65 serves as a coordination point for substrate. A substrate-binding site is contributed by Asn110–Phe114. FMN contacts are provided by Asn139 and Asn172. Residue Asn172 participates in substrate binding. Ser175 serves as the catalytic Nucleophile. Residue Asn177 coordinates substrate. 2 residues coordinate FMN: Lys217 and Thr245. Asn246–Thr247 contacts substrate. FMN-binding positions include Gly268, Gly297, and Tyr318–Ser319.

The protein belongs to the dihydroorotate dehydrogenase family. Type 2 subfamily. As to quaternary structure, monomer. The cofactor is FMN.

Its subcellular location is the cell membrane. It carries out the reaction (S)-dihydroorotate + a quinone = orotate + a quinol. It participates in pyrimidine metabolism; UMP biosynthesis via de novo pathway; orotate from (S)-dihydroorotate (quinone route): step 1/1. Functionally, catalyzes the conversion of dihydroorotate to orotate with quinone as electron acceptor. The sequence is that of Dihydroorotate dehydrogenase (quinone) from Flavobacterium lutescens.